The chain runs to 332 residues: Putative D-threonate 4-phosphate dehydrogenase (332 aa).

Substrate-binding residues include H140 and T141. 3 residues coordinate a divalent metal cation: H170, H214, and H270. Residues K278, N287, and R296 each coordinate substrate.

It belongs to the PdxA family. PdxA2 subfamily. In terms of assembly, homodimer. The cofactor is a divalent metal cation.

The catalysed reaction is 4-O-phospho-D-threonate + NAD(+) = dihydroxyacetone phosphate + CO2 + NADH. Its function is as follows. Catalyzes the NAD-dependent oxidation and subsequent decarboxylation of D-threonate 4-phosphate to produce dihydroxyacetone phosphate (DHAP). The sequence is that of Putative D-threonate 4-phosphate dehydrogenase from Oceanobacillus iheyensis (strain DSM 14371 / CIP 107618 / JCM 11309 / KCTC 3954 / HTE831).